A 282-amino-acid polypeptide reads, in one-letter code: MRGTRLMGLLLALAGLLQLGLSLKIAAFNIRTFGETKMSNATLASYIVRIVRRYDIVLIQEVRDSHLVAVGKLLDYLNQDDPNTYHYVVSEPLGRNSYKERYLFLFRPNKVSVLDTYQYDDGCESCGNDSFSREPAVVKFSSHSTKVKEFAIVALHSAPSDAVAEINSLYDVYLDVQQKWHLNDVMLMGDFNADCSYVTSSQWSSIRLRTSSTFQWLIPDSADTTATSTNCAYDRIVVAGSLLQSSVVPGSAAPFDFQAAYGLSNEMALAISDHYPVEVTLT.

The N-terminal stretch at 1 to 22 is a signal peptide; the sequence is MRGTRLMGLLLALAGLLQLGLS. Asparagine 40 is a glycosylation site (N-linked (GlcNAc...) asparagine). The active site involves glutamate 100. Residues cysteine 123 and cysteine 126 are joined by a disulfide bond. Histidine 156 is a catalytic residue. Cysteines 195 and 231 form a disulfide.

It belongs to the DNase I family. It depends on Ca(2+) as a cofactor. Mg(2+) serves as cofactor. The only differences between the A and B forms and the C and D forms are in the compositions of the carbohydrate bound to Asn-40.

The protein resides in the secreted. Its subcellular location is the zymogen granule. It localises to the nucleus envelope. The enzyme catalyses Endonucleolytic cleavage to 5'-phosphodinucleotide and 5'-phosphooligonucleotide end-products.. Functionally, serum endocuclease secreted into body fluids by a wide variety of exocrine and endocrine organs. Expressed by non-hematopoietic tissues and preferentially cleaves protein-free DNA. Among other functions, seems to be involved in cell death by apoptosis. Binds specifically to G-actin and blocks actin polymerization. Together with DNASE1L3, plays a key role in degrading neutrophil extracellular traps (NETs). NETs are mainly composed of DNA fibers and are released by neutrophils to bind pathogens during inflammation. Degradation of intravascular NETs by DNASE1 and DNASE1L3 is required to prevent formation of clots that obstruct blood vessels and cause organ damage following inflammation. The protein is Deoxyribonuclease-1 (DNASE1) of Bos taurus (Bovine).